The following is a 308-amino-acid chain: E3 ubiquitin-protein ligase RING2 (308 aa).

Ser-2 is modified (N-acetylserine). The segment at 2–179 (SQAVQTNGTQ…AEDNGDSSHC (178 aa)) is interaction with HIP2. Ser-41 is modified (phosphoserine). The RING-type zinc-finger motif lies at 51 to 91 (CPICLDMLKNTMTTKECLHRFCADCIITALRSGNKECPTCR). The tract at residues 93 to 98 (KLVSKR) is interaction with nucleosomes via an acidic patch on histone H2A and histone H2B. Lys-112 participates in a covalent cross-link: Glycyl lysine isopeptide (Lys-Gly) (interchain with G-Cter in ubiquitin). Residues Ser-143 and Ser-168 each carry the phosphoserine modification. The disordered stretch occupies residues 157 to 206 (QRGKKQQIENGSGAEDNGDSSHCSNASTHSNQEAGPSNKRTKTSDDSGLE). Polar residues predominate over residues 176–191 (SSHCSNASTHSNQEAG). A Glycyl lysine isopeptide (Lys-Gly) (interchain with G-Cter in SUMO2) cross-link involves residue Lys-249.

In terms of assembly, component of chromatin-associated Polycomb (PcG) complexes. Component of a number of PRC1-like complexes; these complexes contain either the polycomb group ring finger protein PCGF1, or PCGF2, or PCGF3, or BMI1, or PCGF5, or PCGF6. Distinct PRC1-like complexes are composed of a RING1 subunit (RING1B or RING1A), one of the six PCGF proteins (PCGF1, PCGF2, PCGF3, BMI1, PCGF5 or PCGF6), one PHC protein (PHC1, PHC2 or PHC3) and one of the CBX proteins (CBX2, CBX4, CBX6, CBX7 or CBX8). Part of a complex that contains RNF2, UB2D3 and BMI1; within that complex RNF2 and BMI1 form a tight heterodimer, where UB2D3 interacts only with RNF2. The complex composed of RNF2, UB2D3 and BMI1 binds nucleosomes, and has activity only with nucleosomal histone H2A. Part of a complex that contains PCGF5, RNF2 and UBE2D3. Part of a complex that contains AUTS2, PCGF5, RNF2, CSNK2B and RYBP. Interacts with CBX6 and CBX8. Interacts with PHC1, PCGF2, RYBP, CBX7, CBX4, CBX2, RNF1/RING1, BMI1 and PHC2. Interaction with RYBP and CBX7 is mutually exclusive; both compete for the same binding site on RNF2. Component of repressive BCOR complex containing a Polycomb group subcomplex at least composed of RYBP, PCGF1, BCOR and RING1. Interacts with CBX2 and PHC1. Interacts with CHTOP. Interacts with AURKB. Part of the E2F6.com-1 complex in G0 phase composed of E2F6, MGA, MAX, TFDP1, CBX3, BAT8, EUHMTASE1, RNF1/RING1, RNF2/RING2, MBLR, L3MBTL2 and YAF2. Component of some MLL1/MLL complex, at least composed of the core components KMT2A/MLL1, ASH2L, HCFC1/HCF1, WDR5 and RBBP5, as well as the facultative components BACC1, CHD8, E2F6, HSP70, INO80C, KANSL1, LAS1L, MAX, MCRS1, MGA, MYST1/MOF, PELP1, PHF20, PRP31, RING2, RUVB1/TIP49A, RUVB2/TIP49B, SENP3, TAF1, TAF4, TAF6, TAF7, TAF9 and TEX10. Interacts with RYBP, HIP2 and TFCP2. Interacts with NUPR1. Interacts with SAMD7 in a PHC2-dependent manner. Monoubiquitinated, by auto-ubiquitination. Polyubiquitinated in the presence of UBE2D3 (in vitro).

The protein resides in the nucleus. It is found in the cytoplasm. It localises to the chromosome. It carries out the reaction S-ubiquitinyl-[E2 ubiquitin-conjugating enzyme]-L-cysteine + [acceptor protein]-L-lysine = [E2 ubiquitin-conjugating enzyme]-L-cysteine + N(6)-ubiquitinyl-[acceptor protein]-L-lysine.. It participates in protein modification; protein ubiquitination. Functionally, E3 ubiquitin-protein ligase that mediates monoubiquitination of 'Lys-119' of histone H2A (H2AK119Ub), thereby playing a central role in histone code and gene regulation. H2AK119Ub gives a specific tag for epigenetic transcriptional repression and participates in X chromosome inactivation of female mammals. May be involved in the initiation of both imprinted and random X inactivation. Essential component of a Polycomb group (PcG) multiprotein PRC1-like complex, a complex class required to maintain the transcriptionally repressive state of many genes, including Hox genes, throughout development. PcG PRC1 complex acts via chromatin remodeling and modification of histones, rendering chromatin heritably changed in its expressibility. E3 ubiquitin-protein ligase activity is enhanced by BMI1/PCGF4. Acts as the main E3 ubiquitin ligase on histone H2A of the PRC1 complex, while RING1 may rather act as a modulator of RNF2/RING2 activity. Plays a role in the transcriptional repression of genes that are required for pluripotency in embryonic stem cells, thereby contributing to differentiation of the ectodermal and endodermal germ layers. Association with the chromosomal DNA is cell-cycle dependent. In resting B- and T-lymphocytes, interaction with AURKB leads to block its activity, thereby maintaining transcription in resting lymphocytes. Also acts as a negative regulator of autophagy by mediating ubiquitination of AMBRA1, leading to its subsequent degradation. The sequence is that of E3 ubiquitin-protein ligase RING2 (Rnf2) from Rattus norvegicus (Rat).